We begin with the raw amino-acid sequence, 137 residues long: Acyl carrier protein 4, chloroplastic (137 aa).

A chloroplast-targeting transit peptide spans 1–48 (MASLSTTSLSFKAPSTTISQVLRKASSSQSVTFGRFTSSTKSLRLQIS). The Carrier domain occupies 53-128 (AETVQKVSDI…EAADLIEDLV (76 aa)). S88 carries the O-(pantetheine 4'-phosphoryl)serine modification.

Belongs to the acyl carrier protein (ACP) family. In terms of processing, 4'-phosphopantetheine is transferred from CoA to a specific serine of apo-ACP by acpS. This modification is essential for activity because fatty acids are bound in thioester linkage to the sulfhydryl of the prosthetic group.

The protein localises to the plastid. It is found in the chloroplast. Its function is as follows. Carrier of the growing fatty acid chain in fatty acid biosynthesis that plays a major role in the biosynthesis of fatty acids in leaves. Required for the biosynthesis of chloroplast photosynthetic membrane lipids such as monogalactosyldiacylglycerol, digalactosyldiacylglycerol and phosphatidylglycerol. Is essential for the biosynthesis of the cuticular wax and cutin polymers in leaves, and for the establishment of systemic acquired resistance (SAR). This Arabidopsis thaliana (Mouse-ear cress) protein is Acyl carrier protein 4, chloroplastic (ACP4).